A 301-amino-acid polypeptide reads, in one-letter code: Probable alpha-L-glutamate ligase (301 aa).

An ATP-grasp domain is found at 104 to 287 (LQLLSRKGIG…VAGIIIEYLE (184 aa)). ATP-binding positions include K141, 178 to 179 (EY), D187, and 211 to 213 (RSN). The Mg(2+) site is built by D248, E260, and N262. D248, E260, and N262 together coordinate Mn(2+).

Belongs to the RimK family. It depends on Mg(2+) as a cofactor. Mn(2+) serves as cofactor.

The chain is Probable alpha-L-glutamate ligase from Azotobacter vinelandii (strain DJ / ATCC BAA-1303).